The following is a 36-amino-acid chain: Ostricacin-1 (36 aa).

3 disulfide bridges follow: C3–C29, C8–C23, and C13–C30.

It is found in the secreted. Has antibacterial activity against the Gram-positive bacteria S.aureus 1056 MRSA (MIC=1.25 ug/ml) and S.aureus NCTC 4163 (MIC=6.7 ug/ml), and the Gram-negative bacteria E.coli O157:H7 (MIC=0.96 ug/ml) and E.coli 0111 (MIC=6.7 ug/ml). Does not have antifungal activity against the yeast C.albicans 3153A. In Struthio camelus (Common ostrich), this protein is Ostricacin-1.